We begin with the raw amino-acid sequence, 228 residues long: Non-specific lipid-transfer protein EPAD1 (228 aa).

The first 24 residues, 1–24 (MERSHLAVLLGLLAFAAGVPAAAA), serve as a signal peptide directing secretion. 3 disulfide bridges follow: cysteine 40–cysteine 62, cysteine 63–cysteine 105, and cysteine 78–cysteine 119. The N-linked (GlcNAc...) asparagine glycan is linked to asparagine 94. Residues 124–207 (PPASIVTAPP…PPRSGASSSL (84 aa)) form a disordered region. Over residues 145-162 (REAPPPPPAAEKLSPPPQ) the composition is skewed to pro residues.

The protein belongs to the plant LTP family. Expressed in young panicles. Specifically expressed in pollen mother cells and young microspores.

The protein resides in the cell membrane. In terms of biological role, plant non-specific lipid-transfer protein that binds phospholipids in vitro. Required for correct pollen exine patterning by controlling the continuity and homogeneity of the primexine distribution. The polypeptide is Non-specific lipid-transfer protein EPAD1 (Oryza sativa subsp. japonica (Rice)).